Here is a 405-residue protein sequence, read N- to C-terminus: Enoyl-[acyl-carrier-protein] reductase [NADH] (405 aa).

Residues 51-56 (GASSGY), 77-78 (FE), 114-115 (DA), and 142-143 (LA) contribute to the NAD(+) site. Tyrosine 228 is a binding site for substrate. Tyrosine 238 serves as the catalytic Proton donor. NAD(+)-binding positions include lysine 247 and 276–278 (VVT).

This sequence belongs to the TER reductase family. As to quaternary structure, monomer.

It carries out the reaction a 2,3-saturated acyl-[ACP] + NAD(+) = a (2E)-enoyl-[ACP] + NADH + H(+). It functions in the pathway lipid metabolism; fatty acid biosynthesis. Functionally, involved in the final reduction of the elongation cycle of fatty acid synthesis (FAS II). Catalyzes the reduction of a carbon-carbon double bond in an enoyl moiety that is covalently linked to an acyl carrier protein (ACP). The polypeptide is Enoyl-[acyl-carrier-protein] reductase [NADH] (Chromohalobacter salexigens (strain ATCC BAA-138 / DSM 3043 / CIP 106854 / NCIMB 13768 / 1H11)).